The following is a 218-amino-acid chain: uncharacterized protein (218 aa).

A helical transmembrane segment spans residues 11 to 31; it reads AAGLFPLALMLSGCISYALVS.

It is found in the membrane. This is an uncharacterized protein from Escherichia coli (strain K12).